Consider the following 213-residue polypeptide: Thymidylate kinase (213 aa).

10–17 (GLEGAGKT) is a binding site for ATP.

This sequence belongs to the thymidylate kinase family.

It catalyses the reaction dTMP + ATP = dTDP + ADP. In terms of biological role, phosphorylation of dTMP to form dTDP in both de novo and salvage pathways of dTTP synthesis. In Escherichia coli O157:H7 (strain EC4115 / EHEC), this protein is Thymidylate kinase.